An 824-amino-acid chain; its full sequence is Leucine--tRNA ligase (824 aa).

Residues proline 41 to histidine 51 carry the 'HIGH' region motif. Positions lysine 580–serine 584 match the 'KMSKS' region motif. Lysine 583 serves as a coordination point for ATP.

Belongs to the class-I aminoacyl-tRNA synthetase family.

It localises to the cytoplasm. The catalysed reaction is tRNA(Leu) + L-leucine + ATP = L-leucyl-tRNA(Leu) + AMP + diphosphate. The protein is Leucine--tRNA ligase of Thermotoga petrophila (strain ATCC BAA-488 / DSM 13995 / JCM 10881 / RKU-1).